The sequence spans 693 residues: Polyribonucleotide nucleotidyltransferase (693 aa).

Residues Asp486 and Asp492 each contribute to the Mg(2+) site. The 60-residue stretch at 553–612 (PRFTTLKIHPDKIRDVIGKGGATIRALTEETGTSIDISDDGTVKIASVDKAAGDEARRRI) folds into the KH domain. In terms of domain architecture, S1 motif spans 622–690 (GRIYEGRVVK…KQGRIRLSMK (69 aa)).

Belongs to the polyribonucleotide nucleotidyltransferase family. Component of the RNA degradosome, which is a multiprotein complex involved in RNA processing and mRNA degradation. Mg(2+) serves as cofactor.

It localises to the cytoplasm. It catalyses the reaction RNA(n+1) + phosphate = RNA(n) + a ribonucleoside 5'-diphosphate. Involved in mRNA degradation. Catalyzes the phosphorolysis of single-stranded polyribonucleotides processively in the 3'- to 5'-direction. This chain is Polyribonucleotide nucleotidyltransferase, found in Thioalkalivibrio sulfidiphilus (strain HL-EbGR7).